Consider the following 113-residue polypeptide: Iron-sulfur cluster insertion protein ErpA (113 aa).

The iron-sulfur cluster site is built by C41, C105, and C107.

Belongs to the HesB/IscA family. In terms of assembly, homodimer. The cofactor is iron-sulfur cluster.

Required for insertion of 4Fe-4S clusters for at least IspG. The sequence is that of Iron-sulfur cluster insertion protein ErpA from Aliivibrio fischeri (strain ATCC 700601 / ES114) (Vibrio fischeri).